We begin with the raw amino-acid sequence, 330 residues long: GTP 3',8-cyclase (330 aa).

The Radical SAM core domain maps to 14–225; sequence RFGRTVDYVR…RERLADAYPE (212 aa). GTP is bound at residue arginine 23. [4Fe-4S] cluster contacts are provided by cysteine 30 and cysteine 34. Tyrosine 36 lines the S-adenosyl-L-methionine pocket. Cysteine 37 contributes to the [4Fe-4S] cluster binding site. Position 70 (arginine 70) interacts with GTP. Glycine 74 contacts S-adenosyl-L-methionine. Threonine 101 lines the GTP pocket. Serine 125 contacts S-adenosyl-L-methionine. Position 162 (lysine 162) interacts with GTP. [4Fe-4S] cluster contacts are provided by cysteine 259 and cysteine 262. 264–266 contributes to the GTP binding site; the sequence is KLR. [4Fe-4S] cluster is bound at residue cysteine 276. A compositionally biased stretch (basic and acidic residues) spans 309–318; that stretch reads KPKDGLKSSH. The interval 309–330 is disordered; the sequence is KPKDGLKSSHDTAASSMSQIGG. Polar residues predominate over residues 319–330; that stretch reads DTAASSMSQIGG.

This sequence belongs to the radical SAM superfamily. MoaA family. As to quaternary structure, monomer and homodimer. [4Fe-4S] cluster is required as a cofactor.

The catalysed reaction is GTP + AH2 + S-adenosyl-L-methionine = (8S)-3',8-cyclo-7,8-dihydroguanosine 5'-triphosphate + 5'-deoxyadenosine + L-methionine + A + H(+). Its pathway is cofactor biosynthesis; molybdopterin biosynthesis. Catalyzes the cyclization of GTP to (8S)-3',8-cyclo-7,8-dihydroguanosine 5'-triphosphate. The polypeptide is GTP 3',8-cyclase (Chlorobaculum tepidum (strain ATCC 49652 / DSM 12025 / NBRC 103806 / TLS) (Chlorobium tepidum)).